A 1361-amino-acid polypeptide reads, in one-letter code: DNA-directed RNA polymerase subunit beta (1361 aa).

The protein belongs to the RNA polymerase beta chain family. The RNAP catalytic core consists of 2 alpha, 1 beta, 1 beta' and 1 omega subunit. When a sigma factor is associated with the core the holoenzyme is formed, which can initiate transcription.

The enzyme catalyses RNA(n) + a ribonucleoside 5'-triphosphate = RNA(n+1) + diphosphate. In terms of biological role, DNA-dependent RNA polymerase catalyzes the transcription of DNA into RNA using the four ribonucleoside triphosphates as substrates. In Cellvibrio japonicus (strain Ueda107) (Pseudomonas fluorescens subsp. cellulosa), this protein is DNA-directed RNA polymerase subunit beta.